The following is a 563-amino-acid chain: NAD-dependent malic enzyme (563 aa).

Tyr-101 functions as the Proton donor in the catalytic mechanism. Residue Arg-154 participates in NAD(+) binding. Catalysis depends on Lys-172, which acts as the Proton acceptor. A divalent metal cation-binding residues include Glu-243, Asp-244, and Asp-267. Positions 267 and 416 each coordinate NAD(+).

This sequence belongs to the malic enzymes family. As to quaternary structure, homotetramer. It depends on Mg(2+) as a cofactor. Mn(2+) is required as a cofactor.

The enzyme catalyses (S)-malate + NAD(+) = pyruvate + CO2 + NADH. The catalysed reaction is oxaloacetate + H(+) = pyruvate + CO2. In Pseudomonas savastanoi pv. phaseolicola (strain 1448A / Race 6) (Pseudomonas syringae pv. phaseolicola (strain 1448A / Race 6)), this protein is NAD-dependent malic enzyme.